The following is a 364-amino-acid chain: Dihydroorotate dehydrogenase (quinone) (364 aa).

Residues 61 to 65 (AGFDK) and Thr-85 each bind FMN. Substrate is bound at residue Lys-65. 110–114 (NRMGF) is a substrate binding site. The FMN site is built by Asn-139 and Asn-170. Asn-170 serves as a coordination point for substrate. The active-site Nucleophile is Ser-173. Residue Asn-175 participates in substrate binding. Lys-214 and Ala-242 together coordinate FMN. 243-244 (NT) lines the substrate pocket. FMN-binding positions include Gly-266, Gly-295, and 316–317 (YS).

The protein belongs to the dihydroorotate dehydrogenase family. Type 2 subfamily. As to quaternary structure, monomer. It depends on FMN as a cofactor.

Its subcellular location is the cell membrane. The enzyme catalyses (S)-dihydroorotate + a quinone = orotate + a quinol. Its pathway is pyrimidine metabolism; UMP biosynthesis via de novo pathway; orotate from (S)-dihydroorotate (quinone route): step 1/1. Catalyzes the conversion of dihydroorotate to orotate with quinone as electron acceptor. In Rhodopseudomonas palustris (strain BisA53), this protein is Dihydroorotate dehydrogenase (quinone).